Here is a 430-residue protein sequence, read N- to C-terminus: Glutamate-1-semialdehyde 2,1-aminomutase (430 aa).

An N6-(pyridoxal phosphate)lysine modification is found at Lys-267.

This sequence belongs to the class-III pyridoxal-phosphate-dependent aminotransferase family. HemL subfamily. In terms of assembly, homodimer. Requires pyridoxal 5'-phosphate as cofactor.

The protein resides in the cytoplasm. The enzyme catalyses (S)-4-amino-5-oxopentanoate = 5-aminolevulinate. It participates in porphyrin-containing compound metabolism; protoporphyrin-IX biosynthesis; 5-aminolevulinate from L-glutamyl-tRNA(Glu): step 2/2. This chain is Glutamate-1-semialdehyde 2,1-aminomutase, found in Lawsonia intracellularis (strain PHE/MN1-00).